The following is a 176-amino-acid chain: Zinc finger protein 428 (176 aa).

Positions 1 to 152 are disordered; that stretch reads MTETREPTET…EEEGGTYHCT (152 aa). Acidic residues predominate over residues 16–46; it reads LEEDDEDLSPEPDSEEEEEEEEEETTDDPEY. Position 96 is a phosphothreonine (Thr96). Positions 126–138 are enriched in basic and acidic residues; the sequence is PSRTGETRPAGRD. Residues 149–171 form a C2H2-type zinc finger; sequence YHCTECEDSFDNLGELHGHFMLH.

The chain is Zinc finger protein 428 (Znf428) from Mus musculus (Mouse).